Here is a 350-residue protein sequence, read N- to C-terminus: Probable poly-beta-1,6-N-acetyl-D-glucosamine export protein (350 aa).

10 helical membrane-spanning segments follow: residues 7–29, 44–66, 79–101, 116–138, 145–167, 187–204, 211–233, 243–262, 269–291, and 306–328; these read ELVYLRAIICAIIIITHLLTQIT, FYIRNIVIFGTPCFIILSQLLTT, TRVKYILIPYILMGLFYSYSESL, LLGQWYGYFIVVIMQFFILSYII, LFNSKILLLLSFILQQSFLYYFT, IIFGWIFYFFLGAYMGYN, FLERYLVIMIVLAVATYFVFIAL, SFSYSLTPYNSIMFIVILGI, ILFNTIQMISAFSFFIYLLHPII, and TMVFLAISLLFILGLCIGVGMIL.

The protein belongs to the acyltransferase 3 family.

It is found in the cell membrane. Its function is as follows. Presumably involved in the export of the biofilm adhesin polysaccharide poly-beta-1,6-N-acetyl-D-glucosamine (PNAG, also referred to as PIA) across the cell membrane. In Staphylococcus aureus (strain Mu50 / ATCC 700699), this protein is Probable poly-beta-1,6-N-acetyl-D-glucosamine export protein (icaC).